Here is a 211-residue protein sequence, read N- to C-terminus: Ribosomal RNA large subunit methyltransferase E (211 aa).

S-adenosyl-L-methionine is bound by residues glycine 55, tryptophan 57, aspartate 75, aspartate 93, and aspartate 117. The Proton acceptor role is filled by lysine 157.

Belongs to the class I-like SAM-binding methyltransferase superfamily. RNA methyltransferase RlmE family.

The protein localises to the cytoplasm. The enzyme catalyses uridine(2552) in 23S rRNA + S-adenosyl-L-methionine = 2'-O-methyluridine(2552) in 23S rRNA + S-adenosyl-L-homocysteine + H(+). Its function is as follows. Specifically methylates the uridine in position 2552 of 23S rRNA at the 2'-O position of the ribose in the fully assembled 50S ribosomal subunit. This chain is Ribosomal RNA large subunit methyltransferase E, found in Methanothermobacter thermautotrophicus (strain ATCC 29096 / DSM 1053 / JCM 10044 / NBRC 100330 / Delta H) (Methanobacterium thermoautotrophicum).